A 480-amino-acid chain; its full sequence is Glycogen synthase (480 aa).

Lysine 15 is an ADP-alpha-D-glucose binding site.

Belongs to the glycosyltransferase 1 family. Bacterial/plant glycogen synthase subfamily.

The enzyme catalyses [(1-&gt;4)-alpha-D-glucosyl](n) + ADP-alpha-D-glucose = [(1-&gt;4)-alpha-D-glucosyl](n+1) + ADP + H(+). The protein operates within glycan biosynthesis; glycogen biosynthesis. In terms of biological role, synthesizes alpha-1,4-glucan chains using ADP-glucose. This Clostridioides difficile (strain 630) (Peptoclostridium difficile) protein is Glycogen synthase.